Here is a 364-residue protein sequence, read N- to C-terminus: MQERHTEQDYRALLIADTPIIDVRAPIEFEQGAMPAAINLPLMNNDERAAVGTCYKQQGSDAALALGHKLVAGEIRQQRIDAWRAACLQNPQGILCCARGGQRSHIVQSWLHAAGIDYPLVEGGYKALRQTAIQATIELAQKPIVLIGGCTGSGKTLLVQQQPNGVDLEGLARHRGSAFGRTLQPQLSQASFENLLAAEMLKTDARQDLRLWVLEDESRMIGSNHLPECLRERMTQAAIAVVEDPFEIRLERLNEEYFLRMHHDFTHAYGDEQGWQEYCEYLHHGLSAIKRRLGLQRYNELAAQLDTALTTQLTTGSTDGHLAWLVPLLKEYYDPMYRYQLEKKAEKVVFRGEWAEVAEWVKAR.

Residues 14–137 (LIADTPIIDV…LRQTAIQATI (124 aa)) form the Rhodanese domain. Cys-97 acts as the S-selanylcysteine intermediate in catalysis.

It belongs to the SelU family. Monomer.

It catalyses the reaction 5-methylaminomethyl-2-thiouridine(34) in tRNA + selenophosphate + (2E)-geranyl diphosphate + H2O + H(+) = 5-methylaminomethyl-2-selenouridine(34) in tRNA + (2E)-thiogeraniol + phosphate + diphosphate. The catalysed reaction is 5-methylaminomethyl-2-thiouridine(34) in tRNA + (2E)-geranyl diphosphate = 5-methylaminomethyl-S-(2E)-geranyl-thiouridine(34) in tRNA + diphosphate. The enzyme catalyses 5-methylaminomethyl-S-(2E)-geranyl-thiouridine(34) in tRNA + selenophosphate + H(+) = 5-methylaminomethyl-2-(Se-phospho)selenouridine(34) in tRNA + (2E)-thiogeraniol. It carries out the reaction 5-methylaminomethyl-2-(Se-phospho)selenouridine(34) in tRNA + H2O = 5-methylaminomethyl-2-selenouridine(34) in tRNA + phosphate. Involved in the post-transcriptional modification of the uridine at the wobble position (U34) of tRNA(Lys), tRNA(Glu) and tRNA(Gln). Catalyzes the conversion of 2-thiouridine (S2U-RNA) to 2-selenouridine (Se2U-RNA). Acts in a two-step process involving geranylation of 2-thiouridine (S2U) to S-geranyl-2-thiouridine (geS2U) and subsequent selenation of the latter derivative to 2-selenouridine (Se2U) in the tRNA chain. This is tRNA 2-selenouridine synthase from Shigella boydii serotype 18 (strain CDC 3083-94 / BS512).